A 264-amino-acid polypeptide reads, in one-letter code: DNA repair protein RecO (264 aa).

It belongs to the RecO family.

Its function is as follows. Involved in DNA repair and RecF pathway recombination. This is DNA repair protein RecO from Leuconostoc citreum (strain KM20).